Here is a 365-residue protein sequence, read N- to C-terminus: Formamidopyrimidine-DNA glycosylase (365 aa).

The active-site Schiff-base intermediate with DNA is the Pro2. Glu3 functions as the Proton donor in the catalytic mechanism. The Proton donor; for beta-elimination activity role is filled by Lys61. The disordered stretch occupies residues 121–150 (RGRLAGHGDGMDGTSRTGSTLPGTGGTENS). The segment covering 134 to 150 (TSRTGSTLPGTGGTENS) has biased composition (polar residues). Residues His186, Arg205, and Arg246 each coordinate DNA. The segment at 331–365 (RVYGRGGQPCRHCGTTLATAQVAGRTTVFCPQCQR) adopts an FPG-type zinc-finger fold. Arg355 serves as the catalytic Proton donor; for delta-elimination activity.

It belongs to the FPG family. As to quaternary structure, monomer. Zn(2+) serves as cofactor.

It carries out the reaction Hydrolysis of DNA containing ring-opened 7-methylguanine residues, releasing 2,6-diamino-4-hydroxy-5-(N-methyl)formamidopyrimidine.. The enzyme catalyses 2'-deoxyribonucleotide-(2'-deoxyribose 5'-phosphate)-2'-deoxyribonucleotide-DNA = a 3'-end 2'-deoxyribonucleotide-(2,3-dehydro-2,3-deoxyribose 5'-phosphate)-DNA + a 5'-end 5'-phospho-2'-deoxyribonucleoside-DNA + H(+). Functionally, involved in base excision repair of DNA damaged by oxidation or by mutagenic agents. Acts as a DNA glycosylase that recognizes and removes damaged bases. Has a preference for oxidized purines, such as 7,8-dihydro-8-oxoguanine (8-oxoG). Has AP (apurinic/apyrimidinic) lyase activity and introduces nicks in the DNA strand. Cleaves the DNA backbone by beta-delta elimination to generate a single-strand break at the site of the removed base with both 3'- and 5'-phosphates. This chain is Formamidopyrimidine-DNA glycosylase, found in Nitratidesulfovibrio vulgaris (strain ATCC 29579 / DSM 644 / CCUG 34227 / NCIMB 8303 / VKM B-1760 / Hildenborough) (Desulfovibrio vulgaris).